We begin with the raw amino-acid sequence, 190 residues long: Large ribosomal subunit protein uL5 (190 aa).

Belongs to the universal ribosomal protein uL5 family. Part of the 50S ribosomal subunit; part of the 5S rRNA/L5/L18/L25 subcomplex. Contacts the 5S rRNA and the P site tRNA. Forms a bridge to the 30S subunit in the 70S ribosome.

This is one of the proteins that bind and probably mediate the attachment of the 5S RNA into the large ribosomal subunit, where it forms part of the central protuberance. In the 70S ribosome it contacts protein S13 of the 30S subunit (bridge B1b), connecting the 2 subunits; this bridge is implicated in subunit movement. Contacts the P site tRNA; the 5S rRNA and some of its associated proteins might help stabilize positioning of ribosome-bound tRNAs. The sequence is that of Large ribosomal subunit protein uL5 from Blochmanniella floridana.